Consider the following 228-residue polypeptide: C-type lectin domain-containing protein 88 (228 aa).

Residues 1–18 (MQFIFFGTLFSGLLLVCA) form the signal peptide. O-linked (Xyl...) (chondroitin sulfate) serine glycosylation is present at serine 27. The 131-residue stretch at 88-218 (YSDSCYWVET…CTYLFYSICE (131 aa)) folds into the C-type lectin domain. 2 disulfide bridges follow: cysteine 109/cysteine 217 and cysteine 188/cysteine 209. The N-linked (GlcNAc...) asparagine glycan is linked to asparagine 220.

In Caenorhabditis elegans, this protein is C-type lectin domain-containing protein 88.